The following is a 97-amino-acid chain: Citrate lyase acyl carrier protein (97 aa).

O-(phosphoribosyl dephospho-coenzyme A)serine is present on serine 14.

It belongs to the CitD family. As to quaternary structure, oligomer with a subunit composition of (alpha,beta,gamma)6.

The protein resides in the cytoplasm. Functionally, covalent carrier of the coenzyme of citrate lyase. This Rhodopseudomonas palustris (strain BisA53) protein is Citrate lyase acyl carrier protein.